The primary structure comprises 334 residues: Protein-methionine-sulfoxide reductase catalytic subunit MsrP (334 aa).

Positions 1–44 form a signal peptide, tat-type signal; it reads MKKIRPLTEADVTAESAFFMQRRQVLKALGISAAALSLPSTAQA. Mo-molybdopterin contacts are provided by residues N88, 91-92, C146, T181, N233, R238, and 249-251; these read YE and GIK.

The protein belongs to the MsrP family. As to quaternary structure, heterodimer of a catalytic subunit (MsrP) and a heme-binding subunit (MsrQ). The cofactor is Mo-molybdopterin. Predicted to be exported by the Tat system. The position of the signal peptide cleavage has not been experimentally proven.

The protein resides in the periplasm. It catalyses the reaction L-methionyl-[protein] + a quinone + H2O = L-methionyl-(S)-S-oxide-[protein] + a quinol. It carries out the reaction L-methionyl-[protein] + a quinone + H2O = L-methionyl-(R)-S-oxide-[protein] + a quinol. Its function is as follows. Part of the MsrPQ system that repairs oxidized periplasmic proteins containing methionine sulfoxide residues (Met-O), using respiratory chain electrons. Thus protects these proteins from oxidative-stress damage caused by reactive species of oxygen and chlorine generated by the host defense mechanisms. MsrPQ is essential for the maintenance of envelope integrity under bleach stress, rescuing a wide series of structurally unrelated periplasmic proteins from methionine oxidation, including the primary periplasmic chaperone SurA and the lipoprotein Pal. The catalytic subunit MsrP is non-stereospecific, being able to reduce both (R-) and (S-) diastereoisomers of methionine sulfoxide. The protein is Protein-methionine-sulfoxide reductase catalytic subunit MsrP of Salmonella agona (strain SL483).